The sequence spans 282 residues: Pantothenate synthetase (282 aa).

ATP is bound at residue 31–38 (MGALHDGH). The Proton donor role is filled by His-38. Residue Gln-62 coordinates (R)-pantoate. Gln-62 contacts beta-alanine. 148 to 151 (GKKD) contacts ATP. Gln-154 lines the (R)-pantoate pocket. Residues Val-177 and 185–188 (KSSR) each bind ATP.

It belongs to the pantothenate synthetase family. Homodimer.

It localises to the cytoplasm. The enzyme catalyses (R)-pantoate + beta-alanine + ATP = (R)-pantothenate + AMP + diphosphate + H(+). It participates in cofactor biosynthesis; (R)-pantothenate biosynthesis; (R)-pantothenate from (R)-pantoate and beta-alanine: step 1/1. In terms of biological role, catalyzes the condensation of pantoate with beta-alanine in an ATP-dependent reaction via a pantoyl-adenylate intermediate. The sequence is that of Pantothenate synthetase from Staphylococcus saprophyticus subsp. saprophyticus (strain ATCC 15305 / DSM 20229 / NCIMB 8711 / NCTC 7292 / S-41).